Reading from the N-terminus, the 242-residue chain is uncharacterized protein (242 aa).

Residues 17–85 enclose the HTH gntR-type domain; sequence QRVDERIATT…HGSGSVVRDP (69 aa). The segment at residues 45–64 is a DNA-binding region (H-T-H motif); sequence ERDLAERLGVNRTSLRQGLA.

This is an uncharacterized protein from Mycobacterium tuberculosis (strain ATCC 25618 / H37Rv).